The primary structure comprises 372 residues: Maltose/maltodextrin import ATP-binding protein MalK (372 aa).

The ABC transporter domain maps to 4–234 (VTLKNVCKAY…PQNRFVAGFI (231 aa)). An ATP-binding site is contributed by 36 to 43 (GPSGCGKS).

It belongs to the ABC transporter superfamily. Maltooligosaccharide importer (TC 3.A.1.1.1) family. As to quaternary structure, the complex is composed of two ATP-binding proteins (MalK), two transmembrane proteins (MalG and MalK) and a solute-binding protein (MalE).

It localises to the cell inner membrane. The enzyme catalyses D-maltose(out) + ATP + H2O = D-maltose(in) + ADP + phosphate + H(+). Functionally, part of the ABC transporter complex MalEFGK involved in maltose/maltodextrin import. Responsible for energy coupling to the transport system. The polypeptide is Maltose/maltodextrin import ATP-binding protein MalK (Vibrio parahaemolyticus serotype O3:K6 (strain RIMD 2210633)).